Reading from the N-terminus, the 99-residue chain is UPF0320 protein YER188C-A (99 aa).

This sequence belongs to the UPF0320 family.

The chain is UPF0320 protein YER188C-A from Saccharomyces cerevisiae (strain ATCC 204508 / S288c) (Baker's yeast).